Consider the following 292-residue polypeptide: MDFLNDHINVFGLIAALVILVLTIYESSSLIKEMRDSKSQGELMENGHLIDGIGEFANNVPVGWIASFMCTIVWAFWYFFFGYPLNSFSQIGQYNEEVKAHNQKFEAKWKNLGQKELVDMGQGIFLVHCSQCHGITAEGLHGSAQNLVRWGKEEGIMDTIKHGSKGMDYLAGEMPAMELDEKDAKAIASYVMAEISSVKKTKNPQLIDKGKELFESMGCTGCHGNDGKGLQENQVFAADLTAYGTENFLRNILTHGKKGNIGHMPSFKYKNFSDLQVKALAEFIQSLKPLED.

Helical transmembrane passes span 11-31 and 62-82; these read FGLI…SSLI and VGWI…FFFG. 2 consecutive Cytochrome c domains span residues 116–195 and 205–288; these read ELVD…MAEI and QLID…QSLK. Heme c contacts are provided by cysteine 129, cysteine 132, histidine 133, methionine 174, cysteine 219, cysteine 222, histidine 223, and methionine 264.

Belongs to the CcoP / FixP family. Component of the cbb3-type cytochrome c oxidase at least composed of CcoN, CcoO, CcoQ and CcoP. It depends on heme c as a cofactor.

The protein localises to the cell inner membrane. Its pathway is energy metabolism; oxidative phosphorylation. Its function is as follows. C-type cytochrome. Part of the cbb3-type cytochrome c oxidase complex. CcoP subunit is required for transferring electrons from donor cytochrome c via its heme groups to CcoO subunit. From there, electrons are shuttled to the catalytic binuclear center of CcoN subunit where oxygen reduction takes place. The complex also functions as a proton pump. The protein is Cbb3-type cytochrome c oxidase subunit CcoP of Helicobacter pylori (strain 52).